Consider the following 947-residue polypeptide: Zinc finger protein 268 (947 aa).

In terms of domain architecture, KRAB spans 81 to 152 (LSFMDVFVDF…QAQVPNQTCP (72 aa)). The residue at position 178 (serine 178) is a Phosphoserine; by TBK1. 24 consecutive C2H2-type zinc fingers follow at residues 276 to 298 (FGCSCCEKAFSSKSYLLVHQQTH), 304 to 326 (YGCNECGKDFSSKSYLIVHQRIH), 332 to 354 (HECSECRKTFSFHSQLVIHQRIH), 360 to 382 (YECCECGKVFSRKDQLVSHQKTH), 388 to 410 (YVCNECGKAFGLKSQLIIHERIH), 416 to 438 (YECNECQKAFNTKSNLMVHQRTH), 444 to 466 (YVCSDCGKAFTFKSQLIVHQGIH), 472 to 494 (YGCIQCGKGFSLKSQLIVHQRSH), 500 to 522 (YVCNECGKAFRSKSYLIIHTRTH), 528 to 550 (HECNNCGKAFSFKSQLIIHQRIH), 556 to 578 (YECHECGKAFSRKYQLISHQRTH), 584 to 606 (YECTDCGKAFGLKSQLIIHQRTH), 612 to 634 (FECSECQKAFNTKSNLIVHQRTH), 640 to 662 (YSCNECGKAFTFKSQLIVHKGVH), 668 to 690 (YGCSQCAKTFSLKSQLIVHQRSH), 696 to 718 (YGCSECGKAFRSKSYLIIHMRTH), 724 to 746 (HECRECGKSFSFNSQLIVHQRIH), 752 to 774 (YECSECGKAFNRKDQLISHQRTH), 780 to 802 (YGCSECGKAFSSKSYLIIHMRTH), 808 to 830 (YECNECGKAFIWKSLLIVHERTH), 836 to 858 (YKCSQCEKSFSGKLRLLVHQRMH), 864 to 886 (YECSECGKAFIRNSQLIVHQRTH), 892 to 914 (YGCNECGKTFSQKSILSAHQRTH), and 920 to 942 (CKCTECGKAFCWKSQLIMHQRTH).

The protein belongs to the krueppel C2H2-type zinc-finger protein family. As to quaternary structure, interacts (via the KRAB domain) with TRIM28 (via the RBCC domain); the interaction increases ZNF268 nuclear localization activity. Isoform 2 interacts with CHUK and IKBKB; the interaction is further increased in a TNF-alpha-dependent manner. Interacts with TOLLIP; this interaction is impaired by ZNF268 phosphorylation at Ser-178. Forms a ternary complex with TBK1 and SETD4; the interaction between SETD4 and TBK1 is ZNF268-dependent and leads to TBK1 monomethylation. Post-translationally, phosphorylation at Ser-178 stabilizes the protein by interfering with its binding to TOLLIP, hence impairing its degradation by Tollip-mediated selective autophagy system. Overexpressed in ovarian cancer tissues compared to normal ovarian tissues. Isoform 1 and isoform 2 are expressed in squamous epithelium tissues. Isoform 2 is overexpressed in squamous cervical cancer (at protein level). Expressed in blood cells. Isoform 1 is expressed in pancreas, lung, skeletal muscle, heart, placenta, liver, kidney and brain. Isoform 2 expressed in chronic lymphocytic leukemia (CLL) and several tumor cell lines. Isoform 3 is expressed in several tumor cells. Isoform 5 is expressed in fetal liver and several tumor cells. Isoform 6 is weakly expressed in brain, lung amd small intestin and in several tumor cells. Isoform 7 is expressed in fetal liver and several tumor cells.

The protein localises to the nucleus. Its subcellular location is the cytoplasm. Acts as a transcriptional repressor. Inhibits erythroid differentiation and tumor cell proliferation. Plays a role during ovarian cancer development and progression. Functionally, contributes to cervical carcinogenesis in part through the TNF-alpha-induced NF-kappa-B signaling pathway by interacting with the I-kappa-B-kinase (IKK) core complex. In terms of biological role, involved in the regulation of antiviral interferon signaling. During viral infection, recruits SETD4 to TBK1, leading to TBK1 monomethylation, which is critical for the assembly of TBK1 complex and IRF3 signaling. This chain is Zinc finger protein 268 (ZNF268), found in Homo sapiens (Human).